The sequence spans 344 residues: UDP-3-O-acylglucosamine N-acyltransferase (344 aa).

His-248 acts as the Proton acceptor in catalysis.

It belongs to the transferase hexapeptide repeat family. LpxD subfamily. As to quaternary structure, homotrimer.

It catalyses the reaction a UDP-3-O-[(3R)-3-hydroxyacyl]-alpha-D-glucosamine + a (3R)-hydroxyacyl-[ACP] = a UDP-2-N,3-O-bis[(3R)-3-hydroxyacyl]-alpha-D-glucosamine + holo-[ACP] + H(+). It functions in the pathway bacterial outer membrane biogenesis; LPS lipid A biosynthesis. In terms of biological role, catalyzes the N-acylation of UDP-3-O-acylglucosamine using 3-hydroxyacyl-ACP as the acyl donor. Is involved in the biosynthesis of lipid A, a phosphorylated glycolipid that anchors the lipopolysaccharide to the outer membrane of the cell. This chain is UDP-3-O-acylglucosamine N-acyltransferase, found in Prochlorococcus marinus subsp. pastoris (strain CCMP1986 / NIES-2087 / MED4).